The following is an 865-amino-acid chain: DNA mismatch repair protein MutS (865 aa).

609 to 616 (GPNMAGKS) serves as a coordination point for ATP.

This sequence belongs to the DNA mismatch repair MutS family.

In terms of biological role, this protein is involved in the repair of mismatches in DNA. It is possible that it carries out the mismatch recognition step. This protein has a weak ATPase activity. In Leuconostoc citreum (strain KM20), this protein is DNA mismatch repair protein MutS.